Reading from the N-terminus, the 505-residue chain is Cytochrome P450 monooxygenase efuB (505 aa).

The helical transmembrane segment at 12-34 (GFWPTVAGTVATYLFYQIVATVY) threads the bilayer. Cys450 is a binding site for heme.

Belongs to the cytochrome P450 family. Heme serves as cofactor.

The protein resides in the membrane. It functions in the pathway secondary metabolite biosynthesis; terpenoid biosynthesis. Cytochrome P450 monooxygenase; part of the gene cluster that mediates the biosynthesis of enfumafungin, a glycosylated fernene-type triterpenoid with potent antifungal activity, mediated by its interaction with beta-1,3-glucan synthase and the fungal cell wall. The pathway begins with the terpene cyclase-glycosyl transferase fusion protein that most likely uses 2,3-oxidosqualene as substrate and catalyzes glycosylation immediately after cyclization. The fernene glycoside then could be processed by the desaturase efuI which catalyzes isomerization of a double bond established by efuA to form the core structure. The latter would then undergo a series of hydroxylations in unknown order at C-2, C-19, C-23 and C-25, which would be catalyzed by two of the three cytochrome P450 monooxygenases efuB, efuG or efuH. The hydroxy-group at C-25 becomes oxidized by the dehydrogenase efuE to enable a spontaneous, non-enzymatic hemiacetal formation with C-23. After hydroxylation at C-2, acetylation by the acetyltransferase efuC takes place. The final steps in enfumafungin biosynthesis require expansion of the 5-membered ring by lactonization via a Baeyer-Villiger reaction mediated by one of the BGC's cytochrome P450 monooxygenases (efuB, efuG or efuH) followed by ring cleavage. This type of reaction would establish a double bond between C-20 and C-21 which could be reduced by the reductase efuL to form the final product. This Hormonema carpetanum protein is Cytochrome P450 monooxygenase efuB.